The following is a 585-amino-acid chain: Proline--tRNA ligase (585 aa).

The protein belongs to the class-II aminoacyl-tRNA synthetase family. ProS type 1 subfamily. Homodimer.

It is found in the cytoplasm. It carries out the reaction tRNA(Pro) + L-proline + ATP = L-prolyl-tRNA(Pro) + AMP + diphosphate. Catalyzes the attachment of proline to tRNA(Pro) in a two-step reaction: proline is first activated by ATP to form Pro-AMP and then transferred to the acceptor end of tRNA(Pro). As ProRS can inadvertently accommodate and process non-cognate amino acids such as alanine and cysteine, to avoid such errors it has two additional distinct editing activities against alanine. One activity is designated as 'pretransfer' editing and involves the tRNA(Pro)-independent hydrolysis of activated Ala-AMP. The other activity is designated 'posttransfer' editing and involves deacylation of mischarged Ala-tRNA(Pro). The misacylated Cys-tRNA(Pro) is not edited by ProRS. The chain is Proline--tRNA ligase from Corynebacterium diphtheriae (strain ATCC 700971 / NCTC 13129 / Biotype gravis).